The sequence spans 433 residues: GPI mannosyltransferase 2 (433 aa).

Residue methionine 1 is a topological domain, cytoplasmic. Residues 2-22 form a helical membrane-spanning segment; that stretch reads IVGLTLYFVLFRSIQYLLVFL. The Lumenal portion of the chain corresponds to 23–109; it reads TPIRQFDTST…NNDSIYHALR (87 aa). 2 N-linked (GlcNAc...) asparagine glycosylation sites follow: asparagine 69 and asparagine 101. The helical transmembrane segment at 110-130 threads the bilayer; that stretch reads VGVAIENVLFYLSGIVLYFLT. Residues 131-161 are Cytoplasmic-facing; the sequence is KKIFSQNIRQSQFARTIAKKTSLLFFLTSAA. Residues 162–182 traverse the membrane as a helical segment; that stretch reads GFLTSIYSEPLSFFFAFVGIW. Over 183–215 the chain is Lumenal; that stretch reads SRECSISVPVLGQFDISWRYWFPYSFISMACFT. Residues 216 to 236 form a helical membrane-spanning segment; the sequence is LASLNRSNCVLLGIYFIFDLI. Over 237–243 the chain is Cytoplasmic; that stretch reads ELTKNRK. A helical membrane pass occupies residues 244-264; the sequence is FVKAICFPLLSGSLMFSALLY. At 265-318 the chain is on the lumenal side; that stretch reads QQYYLPYKTFCPQRGEWCKSQLFSSIFITKTSLYSYIQSHYWGVGLLKYWTPNN. A helical membrane pass occupies residues 319 to 339; sequence IPNFLFAVPNIIILIYSSIYF. Topologically, residues 340–350 are cytoplasmic; it reads SKIYPSYNLKA. Residues 351–371 form a helical membrane-spanning segment; that stretch reads LVWITRALVVIVCFFAHVQIL. Residues 372 to 409 lie on the Lumenal side of the membrane; that stretch reads NRIASFLPLHLWYLADRLVKTSDPKKMENPKGDDKIVK. A helical membrane pass occupies residues 410 to 430; it reads FYIYWLAFWIPLQTILFAAFL. The Cytoplasmic segment spans residues 431 to 433; sequence PPA.

It belongs to the PIGV family. In terms of assembly, part of the GPI mannosyltransferase 2 complex composed of GPI18 and PGA1.

It localises to the endoplasmic reticulum membrane. Its pathway is glycolipid biosynthesis; glycosylphosphatidylinositol-anchor biosynthesis. Functionally, mannosyltransferase involved in glycosylphosphatidylinositol-anchor biosynthesis. Responsible for the transfer of the second mannose to the glycosylphosphatidylinositol during GPI precursor assembly. The chain is GPI mannosyltransferase 2 (GPI18) from Saccharomyces cerevisiae (strain ATCC 204508 / S288c) (Baker's yeast).